A 481-amino-acid chain; its full sequence is Glutamyl-tRNA(Gln) amidotransferase subunit A (481 aa).

Active-site charge relay system residues include lysine 74 and serine 149. Serine 173 functions as the Acyl-ester intermediate in the catalytic mechanism.

The protein belongs to the amidase family. GatA subfamily. Heterotrimer of A, B and C subunits.

The enzyme catalyses L-glutamyl-tRNA(Gln) + L-glutamine + ATP + H2O = L-glutaminyl-tRNA(Gln) + L-glutamate + ADP + phosphate + H(+). Allows the formation of correctly charged Gln-tRNA(Gln) through the transamidation of misacylated Glu-tRNA(Gln) in organisms which lack glutaminyl-tRNA synthetase. The reaction takes place in the presence of glutamine and ATP through an activated gamma-phospho-Glu-tRNA(Gln). This is Glutamyl-tRNA(Gln) amidotransferase subunit A from Francisella tularensis subsp. novicida (strain U112).